Here is a 51-residue protein sequence, read N- to C-terminus: Small ribosomal subunit protein eS31 (51 aa).

The Zn(2+) site is built by cysteine 21, cysteine 24, cysteine 39, and cysteine 42. The C4-type zinc-finger motif lies at 21 to 42; that stretch reads CVRCSNGVFMADHGDRYACGKC.

It belongs to the eukaryotic ribosomal protein eS31 family. As to quaternary structure, part of the 30S ribosomal subunit. It depends on Zn(2+) as a cofactor.

This Methanothermobacter thermautotrophicus (strain ATCC 29096 / DSM 1053 / JCM 10044 / NBRC 100330 / Delta H) (Methanobacterium thermoautotrophicum) protein is Small ribosomal subunit protein eS31.